The following is a 289-amino-acid chain: Cyclo(L-tyrosyl-L-tyrosyl) synthase (289 aa).

The interval 1 to 48 (MSYVAAEPGVLISPTDDLQSPRSAPAAHDENADGITGGTRDDSAPNSR) is disordered. S88 (nucleophile) is an active-site residue. Residues N91, 229–233 (YICAE), and Y253 contribute to the substrate site.

Belongs to the CDPS family. As to quaternary structure, homodimer.

It carries out the reaction 2 L-tyrosyl-tRNA(Tyr) = cyclo(L-tyrosyl-L-tyrosyl) + 2 tRNA(Tyr). Involved in the biosynthesis of mycocyclosin. It uses activated amino acids in the form of aminoacyl-tRNAs (aa-tRNAs) as substrates to catalyze the ATP-independent formation of cyclodipeptides which are intermediates in diketopiperazine (DKP) biosynthetic pathways. Catalyzes the formation of cyclo(L-Tyr-L-Tyr) (cYY) from L-tyrosyl-tRNA(Tyr). This chain is Cyclo(L-tyrosyl-L-tyrosyl) synthase, found in Mycobacterium tuberculosis (strain CDC 1551 / Oshkosh).